We begin with the raw amino-acid sequence, 345 residues long: Alpha-2-HS-glycoprotein (345 aa).

Residues 1 to 18 (MKSLVLLLCFAQLWGCQS) form the signal peptide. One can recognise a Cystatin fetuin-A-type 1 domain in the interval 19–133 (APQGTGLGFR…QFRVMHTQCH (115 aa)). Cystine bridges form between Cys32–Cys336, Cys89–Cys100, Cys114–Cys132, Cys146–Cys149, Cys208–Cys219, and Cys230–Cys247. Residue Asn99 is glycosylated (N-linked (GlcNAc...) asparagine). The residue at position 134 (Ser134) is a Phosphoserine. Thr135 is modified (phosphothreonine). Ser138 bears the Phosphoserine mark. The region spanning 144–250 (KLCPRCPLLT…EEVSVACKLF (107 aa)) is the Cystatin fetuin-A-type 2 domain. Residues Asn156 and Asn176 are each glycosylated (N-linked (GlcNAc...) asparagine). Residues Ser305, Ser309, Ser312, and Ser314 each carry the phosphoserine modification. The tract at residues 312–334 (SASGETLHSPKVGQPGAAGPVSP) is disordered.

This sequence belongs to the fetuin family. Post-translationally, phosphorylated by FAM20C in the extracellular medium. Liver is the major site of synthesis, but fetuin is also expressed in limb buds and other extrahepatic tissues during development.

The protein resides in the secreted. Functionally, probably involved in differentiation. Its function is as follows. (Microbial infection) Facilitates invasion of hepatocytes by Plasmodium berghei sporozoites. In Mus musculus (Mouse), this protein is Alpha-2-HS-glycoprotein (Ahsg).